The following is a 406-amino-acid chain: Acetate kinase (406 aa).

Asn7 is a Mg(2+) binding site. Lys14 lines the ATP pocket. Substrate is bound at residue Arg90. The active-site Proton donor/acceptor is Asp147. Residues 207–211 (HLGNG), 283–285 (DMR), and 331–335 (GVGEN) contribute to the ATP site. Residue Glu385 participates in Mg(2+) binding.

It belongs to the acetokinase family. In terms of assembly, homodimer. Requires Mg(2+) as cofactor. Mn(2+) is required as a cofactor.

Its subcellular location is the cytoplasm. The enzyme catalyses acetate + ATP = acetyl phosphate + ADP. It functions in the pathway metabolic intermediate biosynthesis; acetyl-CoA biosynthesis; acetyl-CoA from acetate: step 1/2. Functionally, catalyzes the formation of acetyl phosphate from acetate and ATP. Can also catalyze the reverse reaction. This Thermosipho melanesiensis (strain DSM 12029 / CIP 104789 / BI429) protein is Acetate kinase.